Here is a 281-residue protein sequence, read N- to C-terminus: Diaminopimelate epimerase (281 aa).

Residues Asn13 and Asn66 each coordinate substrate. Cys75 functions as the Proton donor in the catalytic mechanism. Residues 76 to 77 (GN), Asn164, Asn197, and 215 to 216 (ER) contribute to the substrate site. Residue Cys224 is the Proton acceptor of the active site. A substrate-binding site is contributed by 225 to 226 (GT).

The protein belongs to the diaminopimelate epimerase family. In terms of assembly, homodimer.

Its subcellular location is the cytoplasm. It catalyses the reaction (2S,6S)-2,6-diaminopimelate = meso-2,6-diaminopimelate. It functions in the pathway amino-acid biosynthesis; L-lysine biosynthesis via DAP pathway; DL-2,6-diaminopimelate from LL-2,6-diaminopimelate: step 1/1. Catalyzes the stereoinversion of LL-2,6-diaminopimelate (L,L-DAP) to meso-diaminopimelate (meso-DAP), a precursor of L-lysine and an essential component of the bacterial peptidoglycan. This is Diaminopimelate epimerase from Gloeothece citriformis (strain PCC 7424) (Cyanothece sp. (strain PCC 7424)).